A 213-amino-acid chain; its full sequence is Glycerol-3-phosphate acyltransferase (213 aa).

Transmembrane regions (helical) follow at residues 3–23, 48–68, 71–91, 119–139, 144–164, and 165–185; these read IIIL…GLWI, ILGV…GTLA, LPLI…LAVI, PFFL…FSMI, VVAA…GFIL, and TSYD…IIFR.

This sequence belongs to the PlsY family. Probably interacts with PlsX.

The protein resides in the cell membrane. The catalysed reaction is an acyl phosphate + sn-glycerol 3-phosphate = a 1-acyl-sn-glycero-3-phosphate + phosphate. The protein operates within lipid metabolism; phospholipid metabolism. Catalyzes the transfer of an acyl group from acyl-phosphate (acyl-PO(4)) to glycerol-3-phosphate (G3P) to form lysophosphatidic acid (LPA). This enzyme utilizes acyl-phosphate as fatty acyl donor, but not acyl-CoA or acyl-ACP. The polypeptide is Glycerol-3-phosphate acyltransferase (Lactococcus lactis subsp. cremoris (strain MG1363)).